A 564-amino-acid chain; its full sequence is Dicarboxylate transporter 2, chloroplastic (564 aa).

The N-terminal 22 residues, 1 to 22 (MESLALLPTLSLSTTTTTSKAT), are a transit peptide targeting the chloroplast. The segment at 35–58 (RRPHLSLSLSSTPKPTLTFSSHSH) is disordered. A compositionally biased stretch (low complexity) spans 39–58 (LSLSLSSTPKPTLTFSSHSH). The next 12 helical transmembrane spans lie at 94-114 (GAKLIPLILSVSVGLLLRFAV), 127-147 (LLAIFLSTVAGLVLSPLPVGA), 166-186 (TAFCAFTNEVIWLIVISFFFA), 235-255 (AGGIFLPIIKSLSISSGSLPG), 262-282 (LGTYLIMTQFQSAGNSSALFL), 307-327 (VFWLKAASLPAFVALLLTPLI), 356-376 (VTKNEWVMVGTMLLAVSLWVF), 380-400 (IGVSSVVAAMLGLSVLLLLGV), 415-435 (TLAWFAVLVGMASQLTNLGIV), 451-471 (LSWPAAFGILQAAYFFVHYLF), 484-504 (AFLAMNIASGVPGVLAALALA), and 538-558 (MGFIMAVINATIWTVVGGVWW).

The protein belongs to the SLC13A/DASS transporter (TC 2.A.47) family. DIT1 subfamily. As to expression, expressed in leaves.

The protein resides in the plastid. It is found in the chloroplast inner membrane. Glutamate/malate translocator involved with DIT1 in primary ammonia assimilation and in the re-assimilation of ammonia generated by the photorespiratory pathway. Exports the end product of ammonia assimilation, glutamate, from plastids to the cytosol. The precursor for ammonia assimilation, 2-oxoglutarate, is imported from the cytosol by DIT1. In Spinacia oleracea (Spinach), this protein is Dicarboxylate transporter 2, chloroplastic (DIT2).